A 441-amino-acid polypeptide reads, in one-letter code: MAGQSEDPSLERHFKGHRDTVTAVDFNANTKQLASGSMDSCLMVWNMKTQMRAYRFVGHKDAILSVDFSPSGHLIASASRDKTVRLWVPSVKGESTAFKAHTGTVRSVSFSGDGQSLVTASDDKTIKVWTVHRQKFLFSLNQHINWVRCAKFSPDGRLIVSASDDKTIKLWDKTSRECIQSFCEHGGFVNFVDFHPSGTCIAAAATDNTVKVWDIRMNKLIQHYQVHSGVVNSLSFHPSGNYLITASNDSTLKVLDLLEGRLLYTLHGHQGPVTCVKFSREGDFFASGGSDEQVMVWKTNFDAGSYPDLLKYRQNDTFPSGGDYTSIVQPADVHQPARNAHVTQAADLEPHITEMSVKDRSSPLSYTSRSVDQHHPQAEDGNLQTVASTLEHIVGQLDILTRTVGILEQRLSLTEDKLKECIEQQQATVPPSHSGTKKSSF.

WD repeat units follow at residues 16-55, 58-97, 100-139, 142-181, 184-223, 226-265, and 268-307; these read GHRDTVTAVDFNANTKQLASGSMDSCLMVWNMKTQMRAYR, GHKDAILSVDFSPSGHLIASASRDKTVRLWVPSVKGESTA, AHTGTVRSVSFSGDGQSLVTASDDKTIKVWTVHRQKFLFS, QHINWVRCAKFSPDGRLIVSASDDKTIKLWDKTSRECIQS, EHGGFVNFVDFHPSGTCIAAAATDNTVKVWDIRMNKLIQH, VHSGVVNSLSFHPSGNYLITASNDSTLKVLDLLEGRLLYT, and GHQGPVTCVKFSREGDFFASGGSDEQVMVWKTNFDAGSYP. Residues 347–376 form a disordered region; sequence DLEPHITEMSVKDRSSPLSYTSRSVDQHHP. Residues 348-361 show a composition bias toward basic and acidic residues; that stretch reads LEPHITEMSVKDRS. Residues 400–427 are a coiled coil; sequence LTRTVGILEQRLSLTEDKLKECIEQQQA.

The protein belongs to the WD repeat POC1 family. As to quaternary structure, interacts with pat.

Its subcellular location is the cytoplasm. It localises to the cytoskeleton. Functionally, may play an important role in centriole assembly and/or stability and ciliogenesis. The chain is POC1 centriolar protein homolog A (poc1a) from Xenopus laevis (African clawed frog).